Consider the following 901-residue polypeptide: HTH-type transcriptional regulator MalT (901 aa).

39-46 (SPAGYGKT) is an ATP binding site. An HTH luxR-type domain is found at 829–894 (ELIRTSPLTQ…DAVQHAQQLL (66 aa)). Positions 853 to 872 (NEQIAGELAVAATTIKTHIR) form a DNA-binding region, H-T-H motif.

Belongs to the MalT family. In terms of assembly, monomer in solution. Oligomerizes to an active state in the presence of the positive effectors ATP and maltotriose.

With respect to regulation, activated by ATP and maltotriose, which are both required for DNA binding. Its function is as follows. Positively regulates the transcription of the maltose regulon whose gene products are responsible for uptake and catabolism of malto-oligosaccharides. Specifically binds to the promoter region of its target genes, recognizing a short DNA motif called the MalT box. The chain is HTH-type transcriptional regulator MalT from Salmonella gallinarum (strain 287/91 / NCTC 13346).